A 108-amino-acid polypeptide reads, in one-letter code: Ig kappa chain V region 120 (108 aa).

A framework-1 region spans residues alanine 1–cysteine 23. Positions glutamine 24 to alanine 34 are complementarity-determining-1. The segment at tryptophan 35–tyrosine 49 is framework-2. The segment at arginine 50–serine 56 is complementarity-determining-2. A framework-3 region spans residues glycine 57–cysteine 88. The complementarity-determining-3 stretch occupies residues glutamine 89–serine 97. Residues phenylalanine 98–lysine 107 form a framework-4 region.

In Oryctolagus cuniculus (Rabbit), this protein is Ig kappa chain V region 120.